A 403-amino-acid chain; its full sequence is Aminomethyltransferase, mitochondrial (403 aa).

Residues 1–28 constitute a mitochondrion transit peptide; sequence MHRIVSVVAPLGFRLQAQPLVQSRPLSS. Glu-232 and Arg-261 together coordinate substrate. At Lys-368 the chain carries N6-succinyllysine. Substrate is bound at residue Tyr-399.

The protein belongs to the GcvT family. The glycine cleavage system is composed of four proteins: P, T, L and H.

It is found in the mitochondrion. It catalyses the reaction N(6)-[(R)-S(8)-aminomethyldihydrolipoyl]-L-lysyl-[protein] + (6S)-5,6,7,8-tetrahydrofolate = N(6)-[(R)-dihydrolipoyl]-L-lysyl-[protein] + (6R)-5,10-methylene-5,6,7,8-tetrahydrofolate + NH4(+). Its function is as follows. The glycine cleavage system catalyzes the degradation of glycine. This is Aminomethyltransferase, mitochondrial from Mus musculus (Mouse).